A 41-amino-acid polypeptide reads, in one-letter code: Iota-conotoxin-like r11d (41 aa).

4 disulfides stabilise this stretch: Cys2–Cys16, Cys9–Cys19, Cys15–Cys24, and Cys18–Cys35. A 4-hydroxyproline modification is found at Pro8. Pro26 bears the 4-hydroxyproline mark.

Post-translationally, position 41 corresponds to a L-threonine, and not a D-threonine as firstly supposed. Expressed by the venom duct.

It localises to the secreted. Its function is as follows. Iota-conotoxins bind to voltage-gated sodium channels (Nav) and act as agonists by shifting the voltage-dependence of activation to more hyperpolarized levels. Both natural (L-Thr form) and synthetic (D-Thr form) peptides cause paralysis and death following intracranial injection and grooming and hypersensitivity upon intraperitoneal injection into mice. The L-Thr form of the peptide is 7-fold more potent than the D-Thr form. Both natural peptide (L-Thr form) and synthetic peptide (D-Thr form) are active on nerve, and on muscle. The polypeptide is Iota-conotoxin-like r11d (Conus radiatus (Rayed cone)).